Here is a 286-residue protein sequence, read N- to C-terminus: Beta-lactamase SHV-1 (286 aa).

The first 21 residues, 1 to 21, serve as a signal peptide directing secretion; the sequence is MRYIRLCIISLLATLPLAVHA. Serine 66 functions as the Acyl-ester intermediate in the catalytic mechanism. Cysteine 73 and cysteine 119 are joined by a disulfide. The active-site Proton acceptor is glutamate 164. 230–232 serves as a coordination point for substrate; it reads KTG.

Belongs to the class-A beta-lactamase family.

The catalysed reaction is a beta-lactam + H2O = a substituted beta-amino acid. The sequence is that of Beta-lactamase SHV-1 (bla) from Escherichia coli.